The primary structure comprises 649 residues: MSSFGIGKTKEVIFSMEEGSVKMFLRGRPVPMLIPDELAPTYSLDTRSELPSSRLKLDWVYGYRGRDCRANLYLLPTGEVVYFVASVAVLYSVEEQRQRHYLGHNDDIKCLAVHPDMVTIATGQVAGTTKEGKPLPPHVRVWDSVSLSTLHVLGLGVFDRAVCCVAFSKSNGGNLLCAVDESNDHVLSVWDWAKESKVVDSKCSNEAVLVATFHPTDPSLLITCGKSHIYFWSLEGGSLSKRQGLFEKHEKPKYVLCVTFLEGGDVVTGDSGGNLYVWGKGGNRITQEVQGAHDGGVFALCALRDGTLVSGGGRDRRVVLWGSDYSKVQEVEVPEDFGPVRTVAEGRGDTLYVGTTRNSILLGSVHTGFSLLVQGHVEELWGLATHPSRAQFVTCGQDKLVHLWSSETHQPVWSRSIEDPARSAGFHPSGSVLAVGTVTGRWLLLDTETHDLVAIHTDGNEQISVVSFSPDGAYLAVGSHDNLVYVYTVDQGGRKVSRLGKCSGHSSFITHLDWAQDSTCFVTNSGDYEILYWDPVTCKQITSADTVRNVEWATATCVLGFGVFGIWPEGADGTDINAVARSHDGKLLVSADDFGKVHLFSYPCCQPRALSHKYGGHSSHVTNVAFLWDDSMALTTGGKDTSVLQWRVA.

The tandem atypical propeller in EMLs stretch occupies residues 10 to 649; sequence KEVIFSMEEG…DTSVLQWRVA (640 aa). WD repeat units follow at residues 56–93, 97–144, 151–192, 195–234, 241–280, 285–323, 369–406, 410–447, 452–489, 495–535, 564–602, and 609–648; these read KLDW…LYSV, RQRH…VWDS, HVLG…VWDW, ESKV…FWSL, KRQG…VWGK, ITQE…LWGS, FSLL…LWSS, QPVW…LLDT, LVAI…VYTV, KVSR…YWDP, FGIW…LFSY, and ALSH…QWRV. The stretch at 65–106 forms a coiled coil; that stretch reads GRDCRANLYLLPTGEVVYFVASVAVLYSVEEQRQRHYLGHND.

This sequence belongs to the WD repeat EMAP family. Interacts with GRID2 and may also interact with GRID1. Interacts with EML3. Binds unpolymerized tubulins via its WD repeat region.

The protein resides in the cytoplasm. It is found in the cytoskeleton. Its subcellular location is the spindle. Its function is as follows. Tubulin binding protein that inhibits microtubule nucleation and growth, resulting in shorter microtubules. The polypeptide is Echinoderm microtubule-associated protein-like 2 (Eml2) (Mus musculus (Mouse)).